Consider the following 201-residue polypeptide: UPF0301 protein Arad_1256 (201 aa).

It belongs to the UPF0301 (AlgH) family.

The sequence is that of UPF0301 protein Arad_1256 from Rhizobium rhizogenes (strain K84 / ATCC BAA-868) (Agrobacterium radiobacter).